Here is a 378-residue protein sequence, read N- to C-terminus: Poly(3-hydroxyalkanoate) polymerase subunit PhaC (378 aa).

Residues 84 to 356 enclose the AB hydrolase-1 domain; the sequence is PVLIVYALVN…QSFPVGHIGM (273 aa).

The protein belongs to the PHA/PHB synthase family. Type III PhaC subfamily. As to quaternary structure, forms a heterodimer with PhaE, which may multimerize in the presence of 3-hydroxybutyryl-CoA. Both subunits are required for PHB synthesis in E.coli and in PHA-negative A.eutrophus.

The protein localises to the cytoplasm. It catalyses the reaction (3R)-3-hydroxybutanoyl-CoA + [(3R)-hydroxybutanoate](n) = [(3R)-hydroxybutanoate](n+1) + CoA. The protein operates within biopolymer metabolism; poly-(R)-3-hydroxybutanoate biosynthesis. Its function is as follows. When expressed in E.coli with Synechocystis PhaE and C.necator PhaA and PhaB, confers the ability to synthesize up to 13% (w/w) poly(3-hydroxybutyrate) (PHB) depending on the carbon source; all 4 genes are necessary for PHB production. Cell-free in vitro coexpression with PhaE gives a heterodimer able to polymerize 3-hydroxybutyrate-CoA. The sequence is that of Poly(3-hydroxyalkanoate) polymerase subunit PhaC from Synechocystis sp. (strain ATCC 27184 / PCC 6803 / Kazusa).